The sequence spans 54 residues: Large ribosomal subunit protein bL33 (54 aa).

This sequence belongs to the bacterial ribosomal protein bL33 family.

The chain is Large ribosomal subunit protein bL33 from Herpetosiphon aurantiacus (strain ATCC 23779 / DSM 785 / 114-95).